Consider the following 146-residue polypeptide: Holo-[acyl-carrier-protein] synthase (146 aa).

2 residues coordinate Mg(2+): Asp-9 and Glu-63.

The protein belongs to the P-Pant transferase superfamily. AcpS family. Mg(2+) serves as cofactor.

The protein resides in the cytoplasm. The catalysed reaction is apo-[ACP] + CoA = holo-[ACP] + adenosine 3',5'-bisphosphate + H(+). Functionally, transfers the 4'-phosphopantetheine moiety from coenzyme A to a Ser of acyl-carrier-protein. This Burkholderia ambifaria (strain ATCC BAA-244 / DSM 16087 / CCUG 44356 / LMG 19182 / AMMD) (Burkholderia cepacia (strain AMMD)) protein is Holo-[acyl-carrier-protein] synthase.